The primary structure comprises 343 residues: L-threonine 3-dehydrogenase (343 aa).

Cysteine 38 contributes to the Zn(2+) binding site. Residues threonine 40 and histidine 43 each act as charge relay system in the active site. 6 residues coordinate Zn(2+): histidine 63, glutamate 64, cysteine 93, cysteine 96, cysteine 99, and cysteine 107. Residues isoleucine 175, aspartate 195, arginine 200, 262–264 (LGI), and 286–287 (IY) contribute to the NAD(+) site.

It belongs to the zinc-containing alcohol dehydrogenase family. In terms of assembly, homotetramer. It depends on Zn(2+) as a cofactor.

Its subcellular location is the cytoplasm. It catalyses the reaction L-threonine + NAD(+) = (2S)-2-amino-3-oxobutanoate + NADH + H(+). It functions in the pathway amino-acid degradation; L-threonine degradation via oxydo-reductase pathway; glycine from L-threonine: step 1/2. Functionally, catalyzes the NAD(+)-dependent oxidation of L-threonine to 2-amino-3-ketobutyrate. The chain is L-threonine 3-dehydrogenase from Burkholderia thailandensis (strain ATCC 700388 / DSM 13276 / CCUG 48851 / CIP 106301 / E264).